The sequence spans 236 residues: Uridylate kinase (236 aa).

10 to 11 (GS) is an ATP binding site. Position 44 (glycine 44) interacts with UMP. Residues glycine 45 and arginine 49 each coordinate ATP. Residues aspartate 66 and 114 to 120 (ITPGQTT) contribute to the UMP site. Residues threonine 140, tyrosine 146, and aspartate 149 each contribute to the ATP site.

Belongs to the UMP kinase family. As to quaternary structure, homohexamer.

Its subcellular location is the cytoplasm. It catalyses the reaction UMP + ATP = UDP + ADP. Its pathway is pyrimidine metabolism; CTP biosynthesis via de novo pathway; UDP from UMP (UMPK route): step 1/1. Its activity is regulated as follows. Inhibited by UTP. Functionally, catalyzes the reversible phosphorylation of UMP to UDP. This chain is Uridylate kinase, found in Methanospirillum hungatei JF-1 (strain ATCC 27890 / DSM 864 / NBRC 100397 / JF-1).